Reading from the N-terminus, the 194-residue chain is Peptidyl-tRNA hydrolase (194 aa).

Residue His17 coordinates tRNA. The Proton acceptor role is filled by His22. Phe68, Asn70, and Asn116 together coordinate tRNA.

It belongs to the PTH family. As to quaternary structure, monomer.

The protein resides in the cytoplasm. The catalysed reaction is an N-acyl-L-alpha-aminoacyl-tRNA + H2O = an N-acyl-L-amino acid + a tRNA + H(+). Hydrolyzes ribosome-free peptidyl-tRNAs (with 1 or more amino acids incorporated), which drop off the ribosome during protein synthesis, or as a result of ribosome stalling. Functionally, catalyzes the release of premature peptidyl moieties from peptidyl-tRNA molecules trapped in stalled 50S ribosomal subunits, and thus maintains levels of free tRNAs and 50S ribosomes. In Xanthomonas oryzae pv. oryzae (strain MAFF 311018), this protein is Peptidyl-tRNA hydrolase.